A 240-amino-acid polypeptide reads, in one-letter code: 7-cyano-7-deazaguanine synthase (240 aa).

14 to 24 (FSGGQDSATCL) provides a ligand contact to ATP. Positions 202, 217, 220, and 223 each coordinate Zn(2+).

It belongs to the QueC family. It depends on Zn(2+) as a cofactor.

The enzyme catalyses 7-carboxy-7-deazaguanine + NH4(+) + ATP = 7-cyano-7-deazaguanine + ADP + phosphate + H2O + H(+). It participates in purine metabolism; 7-cyano-7-deazaguanine biosynthesis. Functionally, catalyzes the ATP-dependent conversion of 7-carboxy-7-deazaguanine (CDG) to 7-cyano-7-deazaguanine (preQ(0)). This is 7-cyano-7-deazaguanine synthase from Rhodopseudomonas palustris (strain BisB18).